The primary structure comprises 264 residues: Glutamate racemase (264 aa).

Substrate contacts are provided by residues 10 to 11 and 42 to 43; these read DS and YG. The Proton donor/acceptor role is filled by Cys73. 74 to 75 serves as a coordination point for substrate; that stretch reads NT. The active-site Proton donor/acceptor is Cys183. 184–185 contacts substrate; it reads TH.

It belongs to the aspartate/glutamate racemases family.

It catalyses the reaction L-glutamate = D-glutamate. It functions in the pathway cell wall biogenesis; peptidoglycan biosynthesis. Its function is as follows. Provides the (R)-glutamate required for cell wall biosynthesis. The polypeptide is Glutamate racemase (Streptococcus pyogenes serotype M49 (strain NZ131)).